Consider the following 338-residue polypeptide: Probable replication factor C subunit 2 (338 aa).

Position 60-67 (Gly60–Thr67) interacts with ATP.

This sequence belongs to the activator 1 small subunits family. Heteropentamer of various rfc subunits that forms a complex (RFC) with PCNA in the presence of ATP.

It localises to the nucleus. In terms of biological role, the elongation of primed DNA templates by DNA polymerase delta and epsilon requires the action of the accessory proteins PCNA and activator 1. The sequence is that of Probable replication factor C subunit 2 (rfc2) from Dictyostelium discoideum (Social amoeba).